A 584-amino-acid polypeptide reads, in one-letter code: Chondroitin proteoglycan 1 (584 aa).

An N-terminal signal peptide occupies residues 1 to 17 (MTLKPVLLAFLVASAYA). Ser-50 carries an O-linked (Xyl...) (chondroitin sulfate) serine glycan. Chitin-binding type-2 domains lie at 58 to 115 (DTDC…QCGG), 211 to 268 (TKSC…ECTN), and 524 to 578 (VPAC…ECHQ). Intrachain disulfides connect Cys-91–Cys-104 and Cys-244–Cys-257. The interval 267-295 (TNGSGNDEGSADETTPESSGEMPYSNGYG) is disordered. Asn-268 is a glycosylation site (N-linked (GlcNAc...) asparagine). An intrachain disulfide couples Cys-554 to Cys-567.

As to expression, expressed in the germline.

Its function is as follows. Required for polar body extrusion during cytokinesis in embryo development. Affects cortical granule size. Has roles in meiotic chromosome segregation, osmotic barrier function and polarization in conjunction with cpg-2. Binds chitin. The polypeptide is Chondroitin proteoglycan 1 (cpg-1) (Caenorhabditis elegans).